We begin with the raw amino-acid sequence, 279 residues long: 5'-nucleotidase SurE (279 aa).

Residues aspartate 28, aspartate 29, serine 59, and asparagine 113 each contribute to the a divalent metal cation site.

The protein belongs to the SurE nucleotidase family. It depends on a divalent metal cation as a cofactor.

The protein resides in the cytoplasm. It carries out the reaction a ribonucleoside 5'-phosphate + H2O = a ribonucleoside + phosphate. Nucleotidase that shows phosphatase activity on nucleoside 5'-monophosphates. This chain is 5'-nucleotidase SurE, found in Methanospirillum hungatei JF-1 (strain ATCC 27890 / DSM 864 / NBRC 100397 / JF-1).